Consider the following 279-residue polypeptide: Biotin synthase (279 aa).

In terms of domain architecture, Radical SAM core spans 1–228; that stretch reads MKDIFLCSIC…SARLMIAGGR (228 aa). [4Fe-4S] cluster is bound by residues C17, C21, and C24. Residues C61, C96, C154, and R221 each coordinate [2Fe-2S] cluster.

Belongs to the radical SAM superfamily. Biotin synthase family. In terms of assembly, homodimer. [4Fe-4S] cluster is required as a cofactor. It depends on [2Fe-2S] cluster as a cofactor.

It catalyses the reaction (4R,5S)-dethiobiotin + (sulfur carrier)-SH + 2 reduced [2Fe-2S]-[ferredoxin] + 2 S-adenosyl-L-methionine = (sulfur carrier)-H + biotin + 2 5'-deoxyadenosine + 2 L-methionine + 2 oxidized [2Fe-2S]-[ferredoxin]. It functions in the pathway cofactor biosynthesis; biotin biosynthesis; biotin from 7,8-diaminononanoate: step 2/2. Its function is as follows. Catalyzes the conversion of dethiobiotin (DTB) to biotin by the insertion of a sulfur atom into dethiobiotin via a radical-based mechanism. This is Biotin synthase from Wolinella succinogenes (strain ATCC 29543 / DSM 1740 / CCUG 13145 / JCM 31913 / LMG 7466 / NCTC 11488 / FDC 602W) (Vibrio succinogenes).